We begin with the raw amino-acid sequence, 196 residues long: SERTA domain-containing protein 3 (196 aa).

The interval 1–21 (MVGGLKRKHSDLEEEEERWEW) is disordered. In terms of domain architecture, SERTA spans 26-73 (LQSYQQALLRISLDKVQRSLGPRAPSLRRHVLIHNTLQQLQAALRLAP). Residues 104-125 (TSMDGTEPPQNPVTPLGLQNEV) form a disordered region.

As to quaternary structure, interacts with RPA2. (Microbial infection) Interacts with influenza virus PA, PB1 and PB2,leading to inhibition of RdRp complex assembly. In terms of assembly, (Microbial infection) Interacts with zika virus capsid protein.

The protein localises to the nucleus. Functionally, antiviral interferon-stimulated protein that plays a role in innate immunity and in the suppression of viruses through different mechanisms. Plays a role in the late phase response of TLR-induced immune effector expression. During influenza infection, interacts with PB2, PB1, and PA to disrupt the formation of the viral RdRp complex. Inhibits zika virus by interacting with the capsid protein in the nucleolus and reducing its abundance through proteasomal degradation. Strong transcriptional coactivator. The sequence is that of SERTA domain-containing protein 3 (SERTAD3) from Homo sapiens (Human).